We begin with the raw amino-acid sequence, 133 residues long: MARASRSIHARKKRRKLLKEARGYRGTKHTSYKRAKEQVWKSGVYAYVGRKQKKRDFRALWIQRINAAARRHGLSYSRFVHGLRLAGFDLDRKVLADLAVSEPEAFGAVAAQAKNALEGRPVERRVELGGAGR.

This sequence belongs to the bacterial ribosomal protein bL20 family.

Functionally, binds directly to 23S ribosomal RNA and is necessary for the in vitro assembly process of the 50S ribosomal subunit. It is not involved in the protein synthesizing functions of that subunit. This chain is Large ribosomal subunit protein bL20, found in Rubrobacter xylanophilus (strain DSM 9941 / JCM 11954 / NBRC 16129 / PRD-1).